The sequence spans 351 residues: MSIVQLDHVSVTFKRKKAADVQAVQDVTLHIEKGDIYGIVGFSGAGKSTLVRTINLLQKPTAGDVVVGGVDFVKDGKQVISGKDLQARRRKIGMIFQQFNLLNETTVIENIAFALKHSDLSDDELEEKCHKLLKLVDLEDKANAYPAQLSGGQQQRVAIARALANDPEILLSDEATSALDPQTTIQILDLLKKLNRELGLTIVLITHEMAAVKKIANKVAVMENGRVVENGNLRDVFLAPKAELTQKFVGGSLAVVDTLKSLNISLAENEALYQLVYSLNNVAKSIIIELYREVGVEASMLYGNVEVLADEPVGTLLVMVKGDADKQKATLKFLSDEGVTVTELDERGNRL.

Residues 4–249 (VQLDHVSVTF…PKAELTQKFV (246 aa)) enclose the ABC transporter domain. Residue 41–48 (GFSGAGKS) participates in ATP binding.

It belongs to the ABC transporter superfamily. Methionine importer (TC 3.A.1.24) family. The complex is composed of two ATP-binding proteins (MetN), two transmembrane proteins (MetI) and a solute-binding protein (MetQ).

Its subcellular location is the cell membrane. It carries out the reaction L-methionine(out) + ATP + H2O = L-methionine(in) + ADP + phosphate + H(+). The catalysed reaction is D-methionine(out) + ATP + H2O = D-methionine(in) + ADP + phosphate + H(+). In terms of biological role, part of the ABC transporter complex MetNIQ involved in methionine import. Responsible for energy coupling to the transport system. The polypeptide is Methionine import ATP-binding protein MetN (Lactobacillus delbrueckii subsp. bulgaricus (strain ATCC 11842 / DSM 20081 / BCRC 10696 / JCM 1002 / NBRC 13953 / NCIMB 11778 / NCTC 12712 / WDCM 00102 / Lb 14)).